We begin with the raw amino-acid sequence, 461 residues long: MANASPLSPTNQHFFQPLLPGFQSNLKIPVNYFSEHIEGKHEGKTVTLRTDASERTWEVKMEGHRLTEGWKEFVEAHDLRIGDFVVFRHEGDMVFHVTALGPSCCEIQYPQSSRHEEGEESGENEISEKEGEENVQKESDKSSSDLNCFSQSVTHSNISRDAVSVPRDFVKRSGFSKGRHEIVLMNEEGKSWESEVKSYMSGAVYLVGGWTTFCTENKLDVGDSCTFKLLQKAKTPVFQLCSRTKHLPLSFTKVNGLINPGKIILVDKDRAEWSMMLKVDSRGAVYIIGGNDWKSFCAANEVGAGESLALELIQGGVLLNQITTCFQMEQPSFKAEDGRHKRARVQNRSQETDKGAETSRASTMGPKLEITEKGEPSRASTMRPKVEIREKIAETGEPSRASNKSSGIEGNLQHTKPCSVKTDQLAKVKESVVDTLTSIGRFQAELETMKRKLEDSLQELN.

Positions 11–103 form a DNA-binding region, TF-B3 1; it reads NQHFFQPLLP…VFHVTALGPS (93 aa). The disordered stretch occupies residues 110–146; the sequence is PQSSRHEEGEESGENEISEKEGEENVQKESDKSSSDL. The span at 126-143 shows a compositional bias: basic and acidic residues; that stretch reads ISEKEGEENVQKESDKSS. 2 DNA-binding regions (TF-B3) span residues 148-244 and 230-332; these read CFSQ…CSRT and LQKA…EQPS. The interval 333–415 is disordered; that stretch reads FKAEDGRHKR…SGIEGNLQHT (83 aa). Residues 384 to 394 show a composition bias toward basic and acidic residues; it reads PKVEIREKIAE. The segment covering 400–415 has biased composition (polar residues); it reads RASNKSSGIEGNLQHT.

The protein resides in the nucleus. In Arabidopsis thaliana (Mouse-ear cress), this protein is B3 domain-containing protein REM9 (REM9).